Here is a 255-residue protein sequence, read N- to C-terminus: MALNLLTVPCLKDNFAFLLHDAASGRTALVDAPEAAPVLSALAAQGWRLTDILLTHHHDDHIQAVPEIHAATGARVHGAAADAHRLPPLDHALREGDRVAIGAESAVVIDVPGHTRGHIAFHFPGSALAFTGDSLMAAGCGRLFEGTPAEMWASLSKLAALPPETLICSGHDYLDGNLRFALALEPGNPALISRQGRLSEMRREGRLPMPWTLAEELATNPFLRAPLPQMKAAVGLPQASDTVVFAEIRARKDLF.

Zn(2+) contacts are provided by histidine 56, histidine 58, aspartate 60, histidine 61, histidine 114, aspartate 133, and histidine 171.

This sequence belongs to the metallo-beta-lactamase superfamily. Glyoxalase II family. In terms of assembly, monomer. It depends on Zn(2+) as a cofactor.

It carries out the reaction an S-(2-hydroxyacyl)glutathione + H2O = a 2-hydroxy carboxylate + glutathione + H(+). It participates in secondary metabolite metabolism; methylglyoxal degradation; (R)-lactate from methylglyoxal: step 2/2. Its function is as follows. Thiolesterase that catalyzes the hydrolysis of S-D-lactoyl-glutathione to form glutathione and D-lactic acid. In Fuscovulum blasticum (Rhodobacter blasticus), this protein is Hydroxyacylglutathione hydrolase.